The following is a 108-amino-acid chain: Translation initiation factor 1A (108 aa).

Residues 11–85 enclose the S1-like domain; it reads PSKDVPKPEE…TKADIVYRYM (75 aa).

It belongs to the eIF-1A family.

In terms of biological role, seems to be required for maximal rate of protein biosynthesis. Enhances ribosome dissociation into subunits and stabilizes the binding of the initiator Met-tRNA(I) to 40 S ribosomal subunits. The polypeptide is Translation initiation factor 1A (eIF1A) (Metallosphaera sedula (strain ATCC 51363 / DSM 5348 / JCM 9185 / NBRC 15509 / TH2)).